The sequence spans 235 residues: Large ribosomal subunit protein uL1 (235 aa).

This sequence belongs to the universal ribosomal protein uL1 family. Part of the 50S ribosomal subunit.

Functionally, binds directly to 23S rRNA. The L1 stalk is quite mobile in the ribosome, and is involved in E site tRNA release. In terms of biological role, protein L1 is also a translational repressor protein, it controls the translation of the L11 operon by binding to its mRNA. This Prochlorococcus marinus (strain MIT 9303) protein is Large ribosomal subunit protein uL1.